We begin with the raw amino-acid sequence, 109 residues long: MFGKGGLGNLMKQAQQMQEKMQQMQEEIAKLEVTGESGAGLVKVTINGAHNCRRVEIDPSLLEDDKEMLEDLVAAAFNDAARRIEETQKEKMASVSSGMQLPPGFKMPF.

Residues 89 to 109 form a disordered region; it reads KEKMASVSSGMQLPPGFKMPF.

It belongs to the YbaB/EbfC family. In terms of assembly, homodimer.

It is found in the cytoplasm. Its subcellular location is the nucleoid. Binds to DNA and alters its conformation. May be involved in regulation of gene expression, nucleoid organization and DNA protection. The protein is Nucleoid-associated protein CKO_02678 of Citrobacter koseri (strain ATCC BAA-895 / CDC 4225-83 / SGSC4696).